The chain runs to 63 residues: Large ribosomal subunit protein uL30 (63 aa).

Belongs to the universal ribosomal protein uL30 family. In terms of assembly, part of the 50S ribosomal subunit.

This is Large ribosomal subunit protein uL30 from Rickettsia typhi (strain ATCC VR-144 / Wilmington).